The primary structure comprises 827 residues: MTFCYPCRAFALLTRGFTSFMSGWPRIYYKLLNLPLSILVKSKSIPADPAPELGLDTSRPIMYVLPYNSKADLLTLRAQCLAHDLPDPLEPLEIDGTLLPRYVFIHGGPRVFTYYTPKEESIKLFHDYLDLHRSNPNLDVQMVPVSVMFGRAPGREKGEVNPPLRMLNGVQKFFAVLWLGRDSFVRFSPSVSLRRMADEHGTDKTIAQKLARVARMHFARQRLAAVGPRLPARQDLFNKLLASRAIAKAVEDEARSKKISHEKAQQNAIALMEEIAANFSYEMIRLTDRILGFTWNRFYQGINVHNAERVRQLAHDGHELVYVPCHRSHMDYLLLSYVLYHQGLVPPHIAAGINLNFWPAGPIFRRLGAFFIRRTFKGNKLYSTVFREYLGELFSRGYSVEYFVEGGRSRTGRLLDPKTGTLSMTIQAMLRGGTRPITLIPIYIGYEHVMEVGTYAKELRGATKEKESLPQMLRGLSKLRNLGQGYVNFGEPMPLMTYLNQHVPDWRESIDPIEAVRPAWLTPTVNNIAADLMVRINNAGAANAMNLCCTALLASRQRSLTREQLTEQLNCYLDLMRNVPYSTDSTVPSASASELIDHALQMNKFEVEKDTIGDIIILPREQAVLMTYYRNNIAHMLVLPSLMAAIVTQHRHISRDVLMEHVNVLYPMLKAELFLRWDRDELPDVIDALANEMQRQGLITLQDDELHINPAHSRTLQLLAAGARETLQRYAITFWLLSANPSINRGTLEKESRTVAQRLSVLHGINAPEFFDKAVFSSLVLTLRDEGYISDSGDAEPAETMKVYQLLAELITSDVRLTIESATQGEG.

An HXXXXD motif motif is present at residues 325–330; the sequence is CHRSHM.

This sequence belongs to the GPAT/DAPAT family.

The protein localises to the cell inner membrane. It carries out the reaction sn-glycerol 3-phosphate + an acyl-CoA = a 1-acyl-sn-glycero-3-phosphate + CoA. The protein operates within phospholipid metabolism; CDP-diacylglycerol biosynthesis; CDP-diacylglycerol from sn-glycerol 3-phosphate: step 1/3. This Shigella flexneri serotype 5b (strain 8401) protein is Glycerol-3-phosphate acyltransferase.